Here is a 448-residue protein sequence, read N- to C-terminus: Antilisterial bacteriocin subtilosin biosynthesis protein AlbA (448 aa).

The Radical SAM core domain occupies 115–329 (FPMPLHATFE…EQHVIDEFKD (215 aa)). The [4Fe-4S] cluster site is built by cysteine 129, cysteine 133, cysteine 136, cysteine 408, cysteine 414, and cysteine 417.

[4Fe-4S] cluster is required as a cofactor.

The protein resides in the cytoplasm. Its function is as follows. Catalyzes the formation of 3 thioether bonds during production of the sactipeptide subtilosin from SboA. In vitro the thioether bonds cannot be made in the absence of the SboA propeptide, suggesting this is the first reaction in subtilosin maturation. In vitro, in the absence of a second substrate, cleaves S-adenosyl-L-methionine into Met and 5'-dA. This is Antilisterial bacteriocin subtilosin biosynthesis protein AlbA (albA) from Bacillus subtilis (strain 168).